Consider the following 222-residue polypeptide: MKSFSFLAVLSILAITLSLSKASDPSSLQDFCVGVNTPADGVFVNGKFCKDPKLVTVEDFFFTGLHEARPPNPKTGSNVTAVNVNNLPGLNTLGISLVRIDYGVYGQNPPHTHPRASEVLYVAVGTLFVGFVTSNPENRLFSKTLYEGDVFVFPQGLIHFQVNVGKYPAVAFAGLSSQNPGVITIADTVFGSNPQIDPSFLASAFQVDPKIVMDLQTKFIKP.

The N-terminal stretch at 1–22 (MKSFSFLAVLSILAITLSLSKA) is a signal peptide. An intrachain disulfide couples Cys-32 to Cys-49. Residues 63-213 (TGLHEARPPN…AFQVDPKIVM (151 aa)) enclose the Cupin type-1 domain. Asn-78 carries N-linked (GlcNAc...) asparagine glycosylation. Mn(2+) contacts are provided by His-111, His-113, Glu-118, and His-159.

This sequence belongs to the germin family. In terms of assembly, oligomer (believed to be a pentamer but probably hexamer).

Its subcellular location is the secreted. It localises to the extracellular space. The protein localises to the apoplast. Its function is as follows. May play a role in plant defense. Probably has no oxalate oxidase activity even if the active site is conserved. This is Putative germin-like protein subfamily 1 member 9 from Arabidopsis thaliana (Mouse-ear cress).